Here is a 307-residue protein sequence, read N- to C-terminus: Protein PROCA1 (307 aa).

2 disordered regions span residues 134-155 and 183-307; these read NHLS…EVPD and RKEK…PNLS. Residues 200–214 show a composition bias toward basic residues; sequence LKKKAKGKLTKKKTP. Positions 216 to 228 are enriched in polar residues; the sequence is KSESSPADLSQSV. Ser-220 carries the phosphoserine modification. Residues 235 to 248 show a composition bias toward low complexity; sequence PESSPESPGGLESE. A phosphoserine mark is found at Ser-250, Ser-259, Ser-260, Ser-298, and Ser-307. Residues 250–260 show a composition bias toward basic and acidic residues; the sequence is SCERGKERPSS.

Belongs to the PROCA1 family.

The chain is Protein PROCA1 (Proca1) from Mus musculus (Mouse).